We begin with the raw amino-acid sequence, 883 residues long: Lethal(3)malignant brain tumor-like protein 3 (883 aa).

An interaction with RBPJ. Required for transcription repressor activity on Notch target genes region spans residues 1–64 (MTESASSTSG…VKKATATTTW (64 aa)). Residues 146–156 (HAKDKDQKDER) show a composition bias toward basic and acidic residues. The disordered stretch occupies residues 146 to 223 (HAKDKDQKDE…RGDSAVLKQG (78 aa)). 2 stretches are compositionally biased toward acidic residues: residues 157-166 (DGGEDNDEED) and 185-194 (DDGEERDDEM). 3 MBT repeats span residues 232–332 (WCWA…LRPP), 340–439 (FNWQ…LITP), and 448–543 (FSWD…LQAP). A CCHHC-type; degenerate zinc finger spans residues 549 to 593 (LMEPSETGGCPTLGCRGVGHFKKSRYLGTQSGANCPYSEINLSKE). The interval 595–768 (IFPDRLSGDT…TQQQAQTQQQ (174 aa)) is disordered. Basic and acidic residues predominate over residues 616–662 (KRMDTRESSSSPETREKHANNFKEDSEKKKENEVKTSAEAKVVREEP). Residue Lys-638 forms a Glycyl lysine isopeptide (Lys-Gly) (interchain with G-Cter in SUMO2) linkage. 2 stretches are compositionally biased toward low complexity: residues 663–742 (TPSV…QQPQ) and 749–768 (QPQQ…TQQQ). The 65-residue stretch at 811–875 (WSTDEVSEFI…FNSILMFKAA (65 aa)) folds into the SAM domain.

As to quaternary structure, interacts with RNF2. Interacts (via SAM domain) with SAMD1 (via SAM domain); the interaction mediates L3MBTL3 binding to chromatin. Interacts with RBPJ; the interaction is required for L3MBTL3 localization to chromatin and is impaired the Notch-derived peptides containing the intracellular domain (NICD). Interacts (via SAM domain) with KDM1A. Interacts with DCAF5. Interacts with DNMT1. Interacts with E2F1. Interacts with SOX2. Interacts with SFMBT1. Detected in hematopoietic progenitor cells in fetal liver. Detected in adult bone marrow, heart, brain, spleen, lung, liver, kidney and testis.

It localises to the nucleus. In terms of biological role, is a negative regulator of Notch target genes expression, required for RBPJ-mediated transcriptional repression. It recruits KDM1A to Notch-responsive elements and promotes KDM1A-mediated H3K4me demethylation. Involved in the regulation of ubiquitin-dependent degradation of a set of methylated non-histone proteins, including SOX2. It acts as an adapter recruiting the CRL4-DCAF5 E3 ubiquitin ligase complex to methylated target proteins. Also involved in the regulation of ubiquitin-dependent degradation of methylated DNMT1 and E2F1. Required for normal maturation of myeloid progenitor cells. This Mus musculus (Mouse) protein is Lethal(3)malignant brain tumor-like protein 3.